Consider the following 351-residue polypeptide: S-adenosylmethionine:tRNA ribosyltransferase-isomerase (351 aa).

It belongs to the QueA family. As to quaternary structure, monomer.

The protein resides in the cytoplasm. It catalyses the reaction 7-aminomethyl-7-carbaguanosine(34) in tRNA + S-adenosyl-L-methionine = epoxyqueuosine(34) in tRNA + adenine + L-methionine + 2 H(+). It participates in tRNA modification; tRNA-queuosine biosynthesis. Transfers and isomerizes the ribose moiety from AdoMet to the 7-aminomethyl group of 7-deazaguanine (preQ1-tRNA) to give epoxyqueuosine (oQ-tRNA). This is S-adenosylmethionine:tRNA ribosyltransferase-isomerase from Acinetobacter baumannii (strain SDF).